Consider the following 1118-residue polypeptide: Sodium-driven chloride bicarbonate exchanger (1118 aa).

Disordered stretches follow at residues 1–23 (MEIKDQGAQMEPLLPTRNDEEAV) and 58–97 (GRKSHRRHRHRGHKHRKRDRERDSGLEDGRESPSFDTPSQ). The Cytoplasmic segment spans residues 1–509 (MEIKDQGAQM…DFRDAFSLQC (509 aa)). A compositionally biased stretch (basic residues) spans 59 to 76 (RKSHRRHRHRGHKHRKRD). Basic and acidic residues predominate over residues 77–90 (RERDSGLEDGRESP). Ser89 is subject to Phosphoserine. Thr94 is subject to Phosphothreonine. Residues His221 and His223 each contribute to the Zn(2+) site. Disordered regions lie at residues 269–310 (AENK…KGPP) and 457–476 (NGTAAHGEAEPHGGHSGPEL). Position 276 is a phosphoserine (Ser276). A helical membrane pass occupies residues 510–530 (LASFLFLYCACMSPVITFGGL). At 531–538 (LGEATEGR) the chain is on the extracellular side. The helical transmembrane segment at 539-559 (ISAIESLFGASMTGIAYSLFG) threads the bilayer. At 560 to 562 (GQP) the chain is on the cytoplasmic side. Residues 563–583 (LTILGSTGPVLVFEKILFKFC) traverse the membrane as a helical segment. At 584–596 (KEYGLSYLSLRAS) the chain is on the extracellular side. The chain crosses the membrane as a helical span at residues 597–617 (IGLWTATLCIILVATDASSLV). Topologically, residues 618 to 626 (CYITRFTEE) are cytoplasmic. Residues 627–647 (AFASLICIIFIYEALEKLFEL) form a helical membrane-spanning segment. At 648–720 (SETYPINMHN…VGRACGHGHP (73 aa)) the chain is on the extracellular side. N-linked (GlcNAc...) asparagine glycosylation is found at Asn677, Asn687, and Asn697. A helical transmembrane segment spans residues 721–741 (YVPDVLFWSVILFFSTVTMSA). The Cytoplasmic segment spans residues 742-762 (TLKQFKTSRYFPTKVRSIVSD). Residues 763–783 (FAVFLTILCMVLIDYAIGIPS) traverse the membrane as a helical segment. Residues 784-809 (PKLQVPSVFKPTRDDRGWFVTPLGPN) are Extracellular-facing. Residues 810–830 (PWWTIIAAIIPALLCTILIFM) form a helical membrane-spanning segment. Residues 831 to 855 (DQQITAVIINRKEHKLKKGCGYHLD) lie on the Cytoplasmic side of the membrane. The chain crosses the membrane as a helical span at residues 856–876 (LLMVAVMLGVCSIMGLPWFVA). The Extracellular portion of the chain corresponds to 877 to 912 (ATVLSITHVNSLKLESECSAPGEQPKFLGIREQRVT). A helical membrane pass occupies residues 913–933 (GLMIFILMGSSVFMTSILKFI). Topologically, residues 934–935 (PM) are cytoplasmic. Residues 936–956 (PVLYGVFLYMGASSLKGIQLF) traverse the membrane as a helical segment. The Extracellular portion of the chain corresponds to 957-998 (DRIKLFWMPAKHQPDFIYLRHVPLRKVHLFTVIQMSCLGLLW). Residues 999–1019 (IIKVSRAAIVFPMMVLALVFV) form a helical membrane-spanning segment. At 1020-1118 (RKLMDFLFTK…SRFPSKSSPS (99 aa)) the chain is on the cytoplasmic side. Phosphoserine is present on residues Ser1057 and Ser1085.

This sequence belongs to the anion exchanger (TC 2.A.31) family. Post-translationally, N-glycosylated. In terms of tissue distribution, in the brain, detected in cerebral cortex, subcortex, cerebellum, hippocampus and medulla (at protein level). In the cerebrum, expressed at high levels throughout the cortex, at lower levels in striatum and not detectable in the corpus callosum (at protein level). In the cerebellum, detected at high levels in the molecular layer but at very low levels in the granular layer (at protein level). In the central nervous system, detected in neurons in the olfactory bulb, cortex and cerebellum (at protein level). Within the hippocampus, abundantly expressed in CA3 pyramidal cells (at protein level). Strongly expressed in the retina with high levels in bipolar and amacrine cells (at protein level). Expressed in the epithelial cells of the choroid plexus. During embryonic development, expressed in neurons of the central nervous system. Also expressed in the peripheral nervous system and in non-neuronal tissues such as the dura and some epithelia including the acid-secreting epithelium of the stomach and the duodenal epithelium. In the embryonic retina, expression is restricted to the neuronal cell layer and the retinal pigment epithelium. Expressed at high levels in brain and at low levels in the pituitary, testis, kidney and ileum. Also expressed in pancreatic islets.

Its subcellular location is the basolateral cell membrane. It is found in the apical cell membrane. It localises to the cell projection. The protein resides in the dendrite. The protein localises to the axon. Its subcellular location is the perikaryon. It is found in the presynapse. It localises to the postsynapse. It catalyses the reaction 2 hydrogencarbonate(out) + chloride(in) + Na(+)(out) = 2 hydrogencarbonate(in) + chloride(out) + Na(+)(in). With respect to regulation, zinc-binding negatively regulates its activity. Functionally, sodium/bicarbonate cotransporter which plays an important role in regulating intracellular pH. Has been shown to act as a sodium/bicarbonate cotransporter in exchange for intracellular chloride. Has also been shown to act as a sodium/biocarbonate cotransporter which is not responsible for net efflux of chloride, with the observed chloride efflux being due to chloride self-exchange. Controls neuronal pH and may contribute to the secretion of cerebrospinal fluid. Acting on presynaptic intracellular pH, it promotes GABA release, reduces the excitability of CA1 pyramidal neurons, and modulates short-term synaptic plasticity. Required in retinal cells to maintain normal pH which is necessary for normal vision. In the kidney, likely to mediate bicarbonate reclamation in the apical membrane of the proximal tubules. Sodium/bicarbonate cotransporter which mediates cotransport of sodium and bicarbonate in association with an efflux of intracellular chloride. The chain is Sodium-driven chloride bicarbonate exchanger from Mus musculus (Mouse).